We begin with the raw amino-acid sequence, 504 residues long: Pentatricopeptide repeat-containing protein At1g09220, mitochondrial (504 aa).

A mitochondrion-targeting transit peptide spans 1-87 (MFLFSSRRIT…FLFNPLLRCY (87 aa)). 10 PPR repeats span residues 76–110 (KLFLFNPLLRCYSLGETPLHAYFLYDQLQRLHFLS), 120–156 (DSFTYLFLLKASSNPRFPSLLLGIGLHGLTLKLGFES), 157–187 (HVYVQTALVGMYLVGGNMIDAHKVFDEMPER), 188–222 (NPVTWNVMITGLTNLGDFEKALCFLEKMPNRTVVS), 223–253 (WTTIIDGYARVDKPKEAILLFSRMVACDAIK), 255–289 (NEITILAILPAVWNLGDLKMCGSVHAYVGKRGFVP), 291–321 (DIRVTNSLIDAYAKCGCIQSAFKFFIEIPNG), 324–358 (NLVSWTTMISAFAIHGMGKEAVSMFKDMERLGLKP), 359–390 (NRVTMISVLNACSHGGLAEEEFLEFFNTMVNE), and 396–430 (DVKHYGCLVDMLRRKGRLEEAEKIALEIPIEEKAV). The tract at residues 431–504 (VWRMLLGACS…AKLPGHSQVT (74 aa)) is type E motif; degenerate.

The protein belongs to the PPR family. PCMP-E subfamily.

It is found in the mitochondrion. The polypeptide is Pentatricopeptide repeat-containing protein At1g09220, mitochondrial (PCMP-E25) (Arabidopsis thaliana (Mouse-ear cress)).